A 209-amino-acid chain; its full sequence is Transmembrane emp24 domain-containing protein B (209 aa).

A signal peptide spans 1–24 (MNKTNQLINICILVTLFLIGSSSA). Residues 25–174 (LTLQVEPKSQ…RDTSESTNAR (150 aa)) lie on the Lumenal side of the membrane. The 86-residue stretch at 34 to 119 (QECFYNFIES…AKVVTFTWAS (86 aa)) folds into the GOLD domain. Residues 175 to 195 (VVWWTIAEVIVLVVMGVGQIW) traverse the membrane as a helical segment. Residues 196–209 (YLRKWFDNKSTGRV) are Cytoplasmic-facing.

Belongs to the EMP24/GP25L family.

The protein resides in the cytoplasmic vesicle membrane. Functionally, could have a role in the budding of coatomer-coated and other species of coated vesicles. The polypeptide is Transmembrane emp24 domain-containing protein B (empB) (Dictyostelium discoideum (Social amoeba)).